A 199-amino-acid chain; its full sequence is Thymidylate kinase (199 aa).

ATP is bound at residue 7-14 (GTEGVGKT).

The protein belongs to the thymidylate kinase family.

The enzyme catalyses dTMP + ATP = dTDP + ADP. Phosphorylation of dTMP to form dTDP in both de novo and salvage pathways of dTTP synthesis. This is Thymidylate kinase from Acinetobacter baumannii (strain AB307-0294).